Consider the following 452-residue polypeptide: Bifunctional F420 biosynthesis protein FbiB (452 aa).

The interval 1-248 (MVSAPGDHAG…AGEEDLFWLG (248 aa)) is coenzyme F420:L-glutamate ligase. Residues 24-27 (LPEF), S54, and K59 each bind GTP. Position 113 (D113) interacts with a divalent metal cation. N116 is a binding site for GTP. Residues D154 and T155 each contribute to the a divalent metal cation site. The segment at 249–452 (TAEAVERGRR…RDPGDGLVER (204 aa)) is dehydro-coenzyme F420-0 reductase. FMN contacts are provided by residues 264 to 268 (RRSVR) and A292. D324 is a coenzyme F420-(gamma-Glu)n binding site. The FMN site is built by G403 and R440.

The protein in the N-terminal section; belongs to the CofE family. It depends on Mg(2+) as a cofactor. Requires Mn(2+) as cofactor. K(+) is required as a cofactor.

The enzyme catalyses oxidized coenzyme F420-0 + GTP + L-glutamate = oxidized coenzyme F420-1 + GDP + phosphate + H(+). It carries out the reaction oxidized coenzyme F420-0 + FMN + H(+) = dehydro coenzyme F420-0 + FMNH2. The catalysed reaction is oxidized coenzyme F420-1 + GTP + L-glutamate = oxidized coenzyme F420-2 + GDP + phosphate + H(+). It participates in cofactor biosynthesis; coenzyme F420 biosynthesis. Functionally, bifunctional enzyme that catalyzes the GTP-dependent successive addition of two or more gamma-linked L-glutamates to the L-lactyl phosphodiester of 7,8-didemethyl-8-hydroxy-5-deazariboflavin (F420-0) to form polyglutamated F420 derivatives, and the FMNH2-dependent reduction of dehydro-F420-0 to form F420-0. This is Bifunctional F420 biosynthesis protein FbiB from Nocardia farcinica (strain IFM 10152).